The chain runs to 91 residues: Transcription factor ILI3 (91 aa).

Positions 3–58 (SRRGGGGGGGRITDEEINELISKLQALLPESSRSRGASRSSASKLLKETCSYIKSL) constitute a bHLH domain.

This sequence belongs to the bHLH protein family.

In terms of biological role, atypical and probable non DNA-binding bHLH transcription that integrates multiple signaling pathways to regulate cell elongation and plant development. The chain is Transcription factor ILI3 (ILI3) from Oryza sativa subsp. indica (Rice).